The chain runs to 834 residues: RNA-binding protein 12B-B (834 aa).

In terms of domain architecture, RRM 1 spans 154-229 (PYLFLRGLPY…RFIEVMQGSE (76 aa)). A disordered region spans residues 237–277 (GTATEGGDTPRMRSEEHSPSRRINGRHFRKRSHSKSPRARS). Residues 244 to 255 (DTPRMRSEEHSP) are compositionally biased toward basic and acidic residues. Positions 259-277 (INGRHFRKRSHSKSPRARS) are enriched in basic residues. 2 RRM domains span residues 283-359 (FYVH…PVSR) and 401-478 (LCIY…LISE). Disordered stretches follow at residues 546–572 (GYFRQSDRCSPEDFRHSPEDYRHPWEE) and 621–643 (HFRRSYQEHIRRPPQEHFRRSRE). Residues 550 to 572 (QSDRCSPEDFRHSPEDYRHPWEE) show a composition bias toward basic and acidic residues. At S701 the chain carries Phosphoserine. Positions 758–834 (IRVMISNLPF…GPRKVKLSLL (77 aa)) constitute an RRM 4 domain.

The chain is RNA-binding protein 12B-B (Rbm12b2) from Mus musculus (Mouse).